The following is a 431-amino-acid chain: MEALSERFSALQDKLMDLYESGLEDLETQIQHWKLLRQEQILLYYARKRGIMRLGYQPVPPLATSEIKAKDAIAIGILLESLQKSKYADEPWTLVETSLETIRSPPVDCFKKGPKTVEVYFDGDPENVMPYTVWSYIYYQTDEDTWEKVEGHVDYTGAYFYEGQLKNYYIKFEADAKRFGTTGMWEVHVNKDTVFTPVTSSTPPVGDASNNAVPEASTTSLSSPQRSPSTNRRYGRKASSPTATTRRQKRQGKETLTRRRKTRSRSRSREQRGGRETQRSSSRGASKSPRRGGRSGGGPLTRSRSRSRSPESVTGGGVAPSEVGASLRSVSRHSSGRLAQLLDAAKDPPVILLRGGANTLKCYRYRFRKKHAGKFYYVSTTWSWIGGHSTDRVGRARMLIAFHSNHEREKCIQEMKLPLGVDWSYGQFDDL.

Positions 1–201 (MEALSERFSA…DTVFTPVTSS (201 aa)) are transactivation domain. Low complexity predominate over residues 195–205 (FTPVTSSTPPV). Positions 195–330 (FTPVTSSTPP…SEVGASLRSV (136 aa)) are disordered. Over residues 208 to 232 (ASNNAVPEASTTSLSSPQRSPSTNR) the composition is skewed to polar residues. Over residues 267 to 278 (RSREQRGGRETQ) the composition is skewed to basic and acidic residues. Residues 347–431 (DPPVILLRGG…DWSYGQFDDL (85 aa)) form a DNA-binding domain region.

The protein belongs to the papillomaviridae E2 protein family. In terms of assembly, binds DNA as homodimer. Interacts with protein E1; this interaction greatly increases E1 DNA-binding activity. Interacts with protein L1; this interaction enhances E2-dependent replication and transcription activation. Interacts with protein L2; this interaction inhibits E2 transcriptional activity but not DNA replication function E2. Interacts with protein E7; this interaction inhibits E7 oncogenic activity. Interacts with host TAF1; this interaction modulates E2-dependent transcriptional regulation. Interacts with host BRD4; this interaction mediates E2 transcriptional activation function. Additionally, the interaction with host BRD4 on mitotic chromosomes mediates tethering of the viral genome. Interacts with host TOPBP1; this interaction is required for optimal viral DNA replication. In terms of processing, phosphorylated.

It is found in the host nucleus. In terms of biological role, plays a role in the initiation of viral DNA replication. A dimer of E2 interacts with a dimer of E1 in order to improve specificity of E1 DNA binding activity. Once the complex recognizes and binds DNA at specific sites, the E2 dimer is removed from DNA. E2 also regulates viral transcription through binding to the E2RE response element (5'-ACCNNNNNNGGT-3') present in multiple copies in the regulatory regions of the viral genome. Activates or represses transcription depending on E2RE's position with regards to proximal promoter elements including the TATA-box. Repression occurs by sterically hindering the assembly of the transcription initiation complex. The polypeptide is Regulatory protein E2 (Homo sapiens (Human)).